We begin with the raw amino-acid sequence, 156 residues long: Small ribosomal subunit protein uS7 (156 aa).

Belongs to the universal ribosomal protein uS7 family. Part of the 30S ribosomal subunit. Contacts proteins S9 and S11.

Its function is as follows. One of the primary rRNA binding proteins, it binds directly to 16S rRNA where it nucleates assembly of the head domain of the 30S subunit. Is located at the subunit interface close to the decoding center, probably blocks exit of the E-site tRNA. The polypeptide is Small ribosomal subunit protein uS7 (Erythrobacter litoralis (strain HTCC2594)).